Consider the following 166-residue polypeptide: SRAVADSWMDEVIKLCGRELVRAQIAICGKSTWSKRSLSQEDAPQTPRPVAEIVPSFINKDTETINMMSEFVANLPQELKLTLSEMQPALPQLQQYVPVLKDSSLLFEEFKKLIRNRQSEAADSSPSELKYLGLDTHSRKKRQLYSALANKCCHVGCTKRSLARFC.

Residues 1–5 form the signal peptide; that stretch reads SRAVA. Disulfide bonds link C16/C153, C28/C166, and C152/C157. A propeptide spans 37–138 (connecting peptide); the sequence is SLSQEDAPQT…LKYLGLDTHS (102 aa).

Belongs to the insulin family. In terms of assembly, heterodimer of a B chain and an A chain linked by two disulfide bonds. Expressed in the corpus luteum of pregnancy and in the placenta.

It localises to the secreted. Its function is as follows. Relaxin is an ovarian hormone that acts with estrogen to produce dilatation of the birth canal in many mammals. May be involved in remodeling of connective tissues during pregnancy, promoting growth of pubic ligaments and ripening of the cervix. In Pan troglodytes (Chimpanzee), this protein is Prorelaxin H2 (RNL2).